We begin with the raw amino-acid sequence, 233 residues long: Orotidine 5'-phosphate decarboxylase (233 aa).

Substrate is bound by residues D9, K31, 58–67 (DLKLHDIPNT), T120, R182, Q191, G211, and R212. K60 functions as the Proton donor in the catalytic mechanism.

The protein belongs to the OMP decarboxylase family. Type 1 subfamily. Homodimer.

It catalyses the reaction orotidine 5'-phosphate + H(+) = UMP + CO2. Its pathway is pyrimidine metabolism; UMP biosynthesis via de novo pathway; UMP from orotate: step 2/2. Its function is as follows. Catalyzes the decarboxylation of orotidine 5'-monophosphate (OMP) to uridine 5'-monophosphate (UMP). The protein is Orotidine 5'-phosphate decarboxylase of Listeria welshimeri serovar 6b (strain ATCC 35897 / DSM 20650 / CCUG 15529 / CIP 8149 / NCTC 11857 / SLCC 5334 / V8).